The following is a 410-amino-acid chain: Multifunctional CCA protein (410 aa).

2 residues coordinate ATP: Gly8 and Arg11. Residues Gly8 and Arg11 each contribute to the CTP site. The Mg(2+) site is built by Asp21 and Asp23. ATP-binding residues include Arg91, Arg137, and Arg140. CTP-binding residues include Arg91, Arg137, and Arg140. One can recognise an HD domain in the interval 225–326; sequence SGIHTLMTLQ…LNVLKKTDAF (102 aa).

The protein belongs to the tRNA nucleotidyltransferase/poly(A) polymerase family. Bacterial CCA-adding enzyme type 1 subfamily. As to quaternary structure, monomer. Can also form homodimers and oligomers. Requires Mg(2+) as cofactor. Ni(2+) serves as cofactor.

The enzyme catalyses a tRNA precursor + 2 CTP + ATP = a tRNA with a 3' CCA end + 3 diphosphate. It catalyses the reaction a tRNA with a 3' CCA end + 2 CTP + ATP = a tRNA with a 3' CCACCA end + 3 diphosphate. Functionally, catalyzes the addition and repair of the essential 3'-terminal CCA sequence in tRNAs without using a nucleic acid template. Adds these three nucleotides in the order of C, C, and A to the tRNA nucleotide-73, using CTP and ATP as substrates and producing inorganic pyrophosphate. tRNA 3'-terminal CCA addition is required both for tRNA processing and repair. Also involved in tRNA surveillance by mediating tandem CCA addition to generate a CCACCA at the 3' terminus of unstable tRNAs. While stable tRNAs receive only 3'-terminal CCA, unstable tRNAs are marked with CCACCA and rapidly degraded. This is Multifunctional CCA protein from Neisseria gonorrhoeae (strain NCCP11945).